Consider the following 88-residue polypeptide: Small ribosomal subunit protein bS18B (88 aa).

The protein belongs to the bacterial ribosomal protein bS18 family. Part of the 30S ribosomal subunit. Forms a tight heterodimer with protein bS6.

Its function is as follows. Binds as a heterodimer with protein bS6 to the central domain of the 16S rRNA, where it helps stabilize the platform of the 30S subunit. This is Small ribosomal subunit protein bS18B from Mycolicibacterium paratuberculosis (strain ATCC BAA-968 / K-10) (Mycobacterium paratuberculosis).